Consider the following 459-residue polypeptide: MSRNTATQFVAVLAAAAMGVYSLLVLGATTSLTGAASACQTWPSCNGQWFALQSLDLVVVWGHRTAAALTGLAVVGAAVLAWRTGASRRVRTAVTLALALYPVQVVIGAYTAMSAGAAPFTGVHLTLGVGIFASLVVALAWTLDAQTGDLPSAEWEGEPRHTDDGDPTQPGIVRAYVQLMKPRLMWLLCLVAGAGMALASSQLGAGQQLSAATVVLTLGGGVLSIGASGTFNHVLEREQDEKMARTDDRPVVTDRIPPRNALAFGVVLGVASLAAFAAVNLLTAVLGLTAIAFYSIVYTLVLKPNTRQSTVIGGAAGALPALIGWVAVTGAVGVGGVVLAGVIFLWTPAHFYNLALAYKDDYERGGFPLMPVVEGEAKTRRHIVYYIGATLASAVVLAELTGLGPLYAATTVLLGAVFLYFAIRLHRERDRRAAMRSFHASNAYLGCLLVAVVLDTMVV.

The tract at residues 1-184 is unknown; that stretch reads MSRNTATQFV…AYVQLMKPRL (184 aa). Helical transmembrane passes span 9 to 29, 66 to 86, 93 to 113, 123 to 143, 184 to 204, 211 to 231, 262 to 282, 284 to 304, 325 to 345, 382 to 402, 403 to 423, and 438 to 458; these read FVAV…LGAT, AAAL…RTGA, AVTL…YTAM, VHLT…AWTL, LMWL…SQLG, AATV…SGTF, LAFG…VNLL, AVLG…VLKP, WVAV…VIFL, HIVY…ELTG, LGPL…YFAI, and FHAS…DTMV. Residues 185–459 are protoheme IX prenyltransferase; the sequence is MWLLCLVAGA…VAVVLDTMVV (275 aa).

It in the C-terminal section; belongs to the UbiA prenyltransferase family. Protoheme IX farnesyltransferase subfamily.

The protein resides in the cell membrane. It carries out the reaction heme b + (2E,6E)-farnesyl diphosphate + H2O = Fe(II)-heme o + diphosphate. Its pathway is porphyrin-containing compound metabolism; heme O biosynthesis; heme O from protoheme: step 1/1. In terms of biological role, converts heme B (protoheme IX) to heme O by substitution of the vinyl group on carbon 2 of heme B porphyrin ring with a hydroxyethyl farnesyl side group. This is Protoheme IX farnesyltransferase (ctaB) from Halobacterium salinarum (strain ATCC 29341 / DSM 671 / R1).